A 145-amino-acid chain; its full sequence is 3-hydroxyacyl-[acyl-carrier-protein] dehydratase FabZ (145 aa).

Residue His47 is part of the active site.

The protein belongs to the thioester dehydratase family. FabZ subfamily.

The protein resides in the cytoplasm. It catalyses the reaction a (3R)-hydroxyacyl-[ACP] = a (2E)-enoyl-[ACP] + H2O. Its function is as follows. Involved in unsaturated fatty acids biosynthesis. Catalyzes the dehydration of short chain beta-hydroxyacyl-ACPs and long chain saturated and unsaturated beta-hydroxyacyl-ACPs. This Geotalea uraniireducens (strain Rf4) (Geobacter uraniireducens) protein is 3-hydroxyacyl-[acyl-carrier-protein] dehydratase FabZ.